The sequence spans 303 residues: UDP-N-acetylenolpyruvoylglucosamine reductase (303 aa).

The 191-residue stretch at 27–217 (KVGGISQVFY…QTVRKLTQPI (191 aa)) folds into the FAD-binding PCMH-type domain. Arginine 175 is a catalytic residue. The Proton donor role is filled by serine 224. Glutamate 294 is an active-site residue.

This sequence belongs to the MurB family. FAD serves as cofactor.

It is found in the cytoplasm. It catalyses the reaction UDP-N-acetyl-alpha-D-muramate + NADP(+) = UDP-N-acetyl-3-O-(1-carboxyvinyl)-alpha-D-glucosamine + NADPH + H(+). The protein operates within cell wall biogenesis; peptidoglycan biosynthesis. Cell wall formation. In Orientia tsutsugamushi (strain Ikeda) (Rickettsia tsutsugamushi), this protein is UDP-N-acetylenolpyruvoylglucosamine reductase.